The primary structure comprises 221 residues: ATP phosphoribosyltransferase (221 aa).

It belongs to the ATP phosphoribosyltransferase family. Short subfamily. As to quaternary structure, heteromultimer composed of HisG and HisZ subunits.

The protein resides in the cytoplasm. The catalysed reaction is 1-(5-phospho-beta-D-ribosyl)-ATP + diphosphate = 5-phospho-alpha-D-ribose 1-diphosphate + ATP. Its pathway is amino-acid biosynthesis; L-histidine biosynthesis; L-histidine from 5-phospho-alpha-D-ribose 1-diphosphate: step 1/9. Functionally, catalyzes the condensation of ATP and 5-phosphoribose 1-diphosphate to form N'-(5'-phosphoribosyl)-ATP (PR-ATP). Has a crucial role in the pathway because the rate of histidine biosynthesis seems to be controlled primarily by regulation of HisG enzymatic activity. The polypeptide is ATP phosphoribosyltransferase (Anaeromyxobacter dehalogenans (strain 2CP-C)).